Here is a 426-residue protein sequence, read N- to C-terminus: Serine hydroxymethyltransferase (426 aa).

Residues leucine 121 and 125–127 (GHL) each bind (6S)-5,6,7,8-tetrahydrofolate. Lysine 230 carries the N6-(pyridoxal phosphate)lysine modification. A (6S)-5,6,7,8-tetrahydrofolate-binding site is contributed by 354–356 (SPF).

This sequence belongs to the SHMT family. Homodimer. The cofactor is pyridoxal 5'-phosphate.

The protein resides in the cytoplasm. The catalysed reaction is (6R)-5,10-methylene-5,6,7,8-tetrahydrofolate + glycine + H2O = (6S)-5,6,7,8-tetrahydrofolate + L-serine. Its pathway is one-carbon metabolism; tetrahydrofolate interconversion. The protein operates within amino-acid biosynthesis; glycine biosynthesis; glycine from L-serine: step 1/1. Catalyzes the reversible interconversion of serine and glycine with tetrahydrofolate (THF) serving as the one-carbon carrier. This reaction serves as the major source of one-carbon groups required for the biosynthesis of purines, thymidylate, methionine, and other important biomolecules. Also exhibits THF-independent aldolase activity toward beta-hydroxyamino acids, producing glycine and aldehydes, via a retro-aldol mechanism. The polypeptide is Serine hydroxymethyltransferase (Gloeobacter violaceus (strain ATCC 29082 / PCC 7421)).